The chain runs to 206 residues: Flavin reductase (NADPH) (206 aa).

Glycine 10, threonine 12, glycine 13, threonine 15, arginine 35, serine 38, and arginine 39 together coordinate NADP(+). Serine 42 carries the post-translational modification Phosphoserine. Residues aspartate 54, valine 55, leucine 75, and glycine 76 each coordinate NADP(+). A Phosphoserine modification is found at serine 82. NADP(+)-binding residues include methionine 87, cysteine 109, histidine 132, histidine 153, and isoleucine 154. Residue cysteine 109 is the S-nitroso-cysteine intermediate; for S-nitroso-CoA-dependent nitrosyltransferase activity of the active site. Catalysis depends on cysteine 188, which acts as the S-nitroso-cysteine intermediate; for S-nitroso-CoA-dependent nitrosyltransferase activity.

This sequence belongs to the BLVRB family. Monomer.

It is found in the cytoplasm. The enzyme catalyses reduced riboflavin + NADP(+) = riboflavin + NADPH + 2 H(+). It carries out the reaction bilirubin IXbeta + NADP(+) = biliverdin IXbeta + NADPH + H(+). The catalysed reaction is FMNH2 + NAD(+) = FMN + NADH + 2 H(+). It catalyses the reaction FMNH2 + NADP(+) = FMN + NADPH + 2 H(+). The enzyme catalyses S-nitroso-CoA + L-cysteinyl-[protein] = S-nitroso-L-cysteinyl-[protein] + CoA. It carries out the reaction L-cysteinyl-[SCAN] + S-nitroso-CoA = S-nitroso-L-cysteinyl-[SCAN] + CoA. The catalysed reaction is S-nitroso-L-cysteinyl-[SCAN] + L-cysteinyl-[protein] = L-cysteinyl-[SCAN] + S-nitroso-L-cysteinyl-[protein]. Its function is as follows. Enzyme that can both act as a NAD(P)H-dependent reductase and a S-nitroso-CoA-dependent nitrosyltransferase. Promotes fetal heme degradation during development. Also expressed in adult tissues, where it acts as a regulator of hematopoiesis, intermediary metabolism (glutaminolysis, glycolysis, TCA cycle and pentose phosphate pathway) and insulin signaling. Has a broad specificity oxidoreductase activity by catalyzing the NAD(P)H-dependent reduction of a variety of flavins, such as riboflavin, FAD or FMN, biliverdins, methemoglobin and PQQ (pyrroloquinoline quinone). Contributes to fetal heme catabolism by catalyzing reduction of biliverdin IXbeta into bilirubin IXbeta in the liver. Biliverdin IXbeta, which constitutes the major heme catabolite in the fetus is not present in adult. Does not reduce bilirubin IXalpha. Can also reduce the complexed Fe(3+) iron to Fe(2+) in the presence of FMN and NADPH. Acts as a protein nitrosyltransferase by catalyzing nitrosylation of cysteine residues of target proteins, such as HMOX2, INSR and IRS1. S-nitroso-CoA-dependent nitrosyltransferase activity is mediated via a 'ping-pong' mechanism: BLVRB first associates with both S-nitroso-CoA and protein substrate, nitric oxide group is then transferred from S-nitroso-CoA to Cys-109 and Cys-188 residues of BLVRB and from S-nitroso-BLVRB to the protein substrate. Inhibits insulin signaling by mediating nitrosylation of INSR and IRS1, leading to their inhibition. In Mus musculus (Mouse), this protein is Flavin reductase (NADPH) (Blvrb).